Consider the following 103-residue polypeptide: Turripeptide OL55-like (103 aa).

In terms of processing, contains 8 disulfide bonds. In terms of tissue distribution, expressed by the venom duct.

It localises to the secreted. Functionally, acts as a neurotoxin by inhibiting an ion channel. In Lophiotoma albina (Sea snail), this protein is Turripeptide OL55-like.